The chain runs to 327 residues: Nucleotide-binding protein CYB_0992 (327 aa).

ATP is bound at residue 12–19; that stretch reads GLTGAGKT.

Belongs to the RapZ-like family.

Displays ATPase and GTPase activities. This is Nucleotide-binding protein CYB_0992 from Synechococcus sp. (strain JA-2-3B'a(2-13)) (Cyanobacteria bacterium Yellowstone B-Prime).